We begin with the raw amino-acid sequence, 295 residues long: Pyridoxal 5'-phosphate synthase subunit PdxS (295 aa).

Asp23 serves as a coordination point for D-ribose 5-phosphate. Lys80 functions as the Schiff-base intermediate with D-ribose 5-phosphate in the catalytic mechanism. Gly152 is a binding site for D-ribose 5-phosphate. Arg164 is a binding site for D-glyceraldehyde 3-phosphate. D-ribose 5-phosphate-binding positions include Gly213 and 234–235; that span reads GS.

It belongs to the PdxS/SNZ family. In the presence of PdxT, forms a dodecamer of heterodimers.

The enzyme catalyses aldehydo-D-ribose 5-phosphate + D-glyceraldehyde 3-phosphate + L-glutamine = pyridoxal 5'-phosphate + L-glutamate + phosphate + 3 H2O + H(+). It participates in cofactor biosynthesis; pyridoxal 5'-phosphate biosynthesis. Catalyzes the formation of pyridoxal 5'-phosphate from ribose 5-phosphate (RBP), glyceraldehyde 3-phosphate (G3P) and ammonia. The ammonia is provided by the PdxT subunit. Can also use ribulose 5-phosphate and dihydroxyacetone phosphate as substrates, resulting from enzyme-catalyzed isomerization of RBP and G3P, respectively. The protein is Pyridoxal 5'-phosphate synthase subunit PdxS of Methanosphaera stadtmanae (strain ATCC 43021 / DSM 3091 / JCM 11832 / MCB-3).